The following is a 602-amino-acid chain: Myotubularin (602 aa).

The tract at residues 1 to 32 (MASNSTPKYNSNSLENSLRRSPGDGMNHEQND) is disordered. Basic and acidic residues predominate over residues 17–31 (SLRRSPGDGMNHEQN). Residues 28–96 (HEQNDEIPCL…GVIARIEKMG (69 aa)) form the GRAM domain. The 376-residue stretch at 162-537 (GWAVYDAMTE…RHLELWVNYY (376 aa)) folds into the Myotubularin phosphatase domain. A 1,2-diacyl-sn-glycero-3-phospho-(1D-myo-inositol-3,5-bisphosphate) contacts are provided by Asn-287, Asn-312, and Ile-313. A 1,2-diacyl-sn-glycero-3-phospho-(1D-myo-inositol-3-phosphate) contacts are provided by Asn-287, Asn-312, and Ile-313. The Phosphocysteine intermediate role is filled by Cys-374. A 1,2-diacyl-sn-glycero-3-phospho-(1D-myo-inositol-3,5-bisphosphate) contacts are provided by Ser-375, Asp-376, Gly-377, Trp-378, Asp-379, Arg-380, Lys-416, and Arg-420. A 1,2-diacyl-sn-glycero-3-phospho-(1D-myo-inositol-3-phosphate)-binding residues include Ser-375, Asp-376, Gly-377, Trp-378, Asp-379, and Arg-380. Arg-420 lines the a 1,2-diacyl-sn-glycero-3-phospho-(1D-myo-inositol-3-phosphate) pocket. A disordered region spans residues 574-602 (QITNSPKMNSSTTSPSSPSQIMPQVHTPF). Residues 583–592 (SSTTSPSSPS) are compositionally biased toward low complexity.

It belongs to the protein-tyrosine phosphatase family. Non-receptor class myotubularin subfamily.

It localises to the cytoplasm. The protein localises to the cell membrane. Its subcellular location is the cell projection. It is found in the filopodium. The protein resides in the ruffle. It localises to the late endosome. The protein localises to the myofibril. Its subcellular location is the sarcomere. The catalysed reaction is a 1,2-diacyl-sn-glycero-3-phospho-(1D-myo-inositol-3-phosphate) + H2O = a 1,2-diacyl-sn-glycero-3-phospho-(1D-myo-inositol) + phosphate. The enzyme catalyses a 1,2-diacyl-sn-glycero-3-phospho-(1D-myo-inositol-3,5-bisphosphate) + H2O = a 1,2-diacyl-sn-glycero-3-phospho-(1D-myo-inositol-5-phosphate) + phosphate. It carries out the reaction 1,2-dioctanoyl-sn-glycero-3-phospho-(1-D-myo-inositol-3-phosphate) + H2O = 1,2-dioctanoyl-sn-glycero-3-phospho-(1D-myo-inositol) + phosphate. It catalyses the reaction 1,2-dioctanoyl-sn-glycero-3-phospho-(1D-myo-inositol-3,5-bisphosphate) + H2O = 1,2-dioctanoyl-sn-glycero-3-phospho-(1D-myo-inositol-5-phosphate) + phosphate. The catalysed reaction is 1,2-dihexadecanoyl-sn-glycero-3-phospho-(1D-myo-inositol-3,5-phosphate) + H2O = 1,2-dihexadecanoyl-sn-glycero-3-phospho-(1D-myo-inositol-5-phosphate) + phosphate. Its function is as follows. Lipid phosphatase which dephosphorylates phosphatidylinositol 3-monophosphate (PI3P) and phosphatidylinositol 3,5-bisphosphate (PI(3,5)P2). This is Myotubularin (mtm1) from Xenopus tropicalis (Western clawed frog).